A 629-amino-acid chain; its full sequence is tRNA uridine 5-carboxymethylaminomethyl modification enzyme MnmG (629 aa).

13 to 18 contacts FAD; sequence GGGHAG. An NAD(+)-binding site is contributed by 273 to 287; that stretch reads GPRYCPSIEDKITRF.

This sequence belongs to the MnmG family. Homodimer. Heterotetramer of two MnmE and two MnmG subunits. The cofactor is FAD.

It is found in the cytoplasm. In terms of biological role, NAD-binding protein involved in the addition of a carboxymethylaminomethyl (cmnm) group at the wobble position (U34) of certain tRNAs, forming tRNA-cmnm(5)s(2)U34. The chain is tRNA uridine 5-carboxymethylaminomethyl modification enzyme MnmG from Aeromonas hydrophila subsp. hydrophila (strain ATCC 7966 / DSM 30187 / BCRC 13018 / CCUG 14551 / JCM 1027 / KCTC 2358 / NCIMB 9240 / NCTC 8049).